The primary structure comprises 496 residues: Glutamyl-tRNA(Gln) amidotransferase subunit A (496 aa).

Active-site charge relay system residues include lysine 75 and serine 150. The active-site Acyl-ester intermediate is serine 174.

Belongs to the amidase family. GatA subfamily. As to quaternary structure, heterotrimer of A, B and C subunits.

The enzyme catalyses L-glutamyl-tRNA(Gln) + L-glutamine + ATP + H2O = L-glutaminyl-tRNA(Gln) + L-glutamate + ADP + phosphate + H(+). Functionally, allows the formation of correctly charged Gln-tRNA(Gln) through the transamidation of misacylated Glu-tRNA(Gln) in organisms which lack glutaminyl-tRNA synthetase. The reaction takes place in the presence of glutamine and ATP through an activated gamma-phospho-Glu-tRNA(Gln). This chain is Glutamyl-tRNA(Gln) amidotransferase subunit A, found in Burkholderia mallei (strain NCTC 10247).